A 156-amino-acid polypeptide reads, in one-letter code: Cyanate hydratase (156 aa).

Active-site residues include Arg-96, Glu-99, and Ser-122.

This sequence belongs to the cyanase family.

It carries out the reaction cyanate + hydrogencarbonate + 3 H(+) = NH4(+) + 2 CO2. Functionally, catalyzes the reaction of cyanate with bicarbonate to produce ammonia and carbon dioxide. This chain is Cyanate hydratase, found in Escherichia coli (strain ATCC 8739 / DSM 1576 / NBRC 3972 / NCIMB 8545 / WDCM 00012 / Crooks).